Here is a 310-residue protein sequence, read N- to C-terminus: HPr kinase/phosphorylase (310 aa).

Active-site residues include His136 and Lys157. 151–158 (GDSGIGKS) lines the ATP pocket. Ser158 contacts Mg(2+). Asp175 (proton acceptor; for phosphorylation activity. Proton donor; for dephosphorylation activity) is an active-site residue. Positions 199–208 (LEIRGLGIIN) are important for the catalytic mechanism of both phosphorylation and dephosphorylation. Glu200 contributes to the Mg(2+) binding site. Arg241 is a catalytic residue. The tract at residues 262-267 (PVRPGR) is important for the catalytic mechanism of dephosphorylation.

It belongs to the HPrK/P family. In terms of assembly, homohexamer. It depends on Mg(2+) as a cofactor.

The catalysed reaction is [HPr protein]-L-serine + ATP = [HPr protein]-O-phospho-L-serine + ADP + H(+). The enzyme catalyses [HPr protein]-O-phospho-L-serine + phosphate + H(+) = [HPr protein]-L-serine + diphosphate. In terms of biological role, catalyzes the ATP- as well as the pyrophosphate-dependent phosphorylation of a specific serine residue in HPr, a phosphocarrier protein of the phosphoenolpyruvate-dependent sugar phosphotransferase system (PTS). HprK/P also catalyzes the pyrophosphate-producing, inorganic phosphate-dependent dephosphorylation (phosphorolysis) of seryl-phosphorylated HPr (P-Ser-HPr). The two antagonistic activities of HprK/P are regulated by several intracellular metabolites, which change their concentration in response to the absence or presence of rapidly metabolisable carbon sources (glucose, fructose, etc.) in the growth medium. Therefore, by controlling the phosphorylation state of HPr, HPrK/P is a sensor enzyme that plays a major role in the regulation of carbon metabolism and sugar transport: it mediates carbon catabolite repression (CCR), and regulates PTS-catalyzed carbohydrate uptake and inducer exclusion. In Staphylococcus epidermidis (strain ATCC 35984 / DSM 28319 / BCRC 17069 / CCUG 31568 / BM 3577 / RP62A), this protein is HPr kinase/phosphorylase.